The sequence spans 681 residues: DNA ligase (681 aa).

NAD(+) is bound by residues Asp-32–Asp-36, Ser-81–Leu-82, and Glu-113. Lys-115 (N6-AMP-lysine intermediate) is an active-site residue. NAD(+) is bound by residues Arg-136, Glu-173, Lys-290, and Lys-314. Residues Cys-408, Cys-411, Cys-426, and Cys-432 each contribute to the Zn(2+) site. Residues Glu-596–Leu-681 form the BRCT domain.

This sequence belongs to the NAD-dependent DNA ligase family. LigA subfamily. Mg(2+) serves as cofactor. Mn(2+) is required as a cofactor.

The catalysed reaction is NAD(+) + (deoxyribonucleotide)n-3'-hydroxyl + 5'-phospho-(deoxyribonucleotide)m = (deoxyribonucleotide)n+m + AMP + beta-nicotinamide D-nucleotide.. Its function is as follows. DNA ligase that catalyzes the formation of phosphodiester linkages between 5'-phosphoryl and 3'-hydroxyl groups in double-stranded DNA using NAD as a coenzyme and as the energy source for the reaction. It is essential for DNA replication and repair of damaged DNA. In Pectobacterium atrosepticum (strain SCRI 1043 / ATCC BAA-672) (Erwinia carotovora subsp. atroseptica), this protein is DNA ligase.